The following is a 456-amino-acid chain: tRNA-2-methylthio-N(6)-dimethylallyladenosine synthase (456 aa).

Residues 3–120 (KKVYVKTFGC…LPQMIDQRRA (118 aa)) enclose the MTTase N-terminal domain. Residues Cys-12, Cys-49, Cys-83, Cys-157, Cys-161, and Cys-164 each contribute to the [4Fe-4S] cluster site. One can recognise a Radical SAM core domain in the interval 143–377 (RIDGPSAFVS…QATIEENVQR (235 aa)). Residues 380 to 447 (QAMVGKVERI…PHSLRGELVM (68 aa)) enclose the TRAM domain.

This sequence belongs to the methylthiotransferase family. MiaB subfamily. In terms of assembly, monomer. Requires [4Fe-4S] cluster as cofactor.

It localises to the cytoplasm. It carries out the reaction N(6)-dimethylallyladenosine(37) in tRNA + (sulfur carrier)-SH + AH2 + 2 S-adenosyl-L-methionine = 2-methylsulfanyl-N(6)-dimethylallyladenosine(37) in tRNA + (sulfur carrier)-H + 5'-deoxyadenosine + L-methionine + A + S-adenosyl-L-homocysteine + 2 H(+). In terms of biological role, catalyzes the methylthiolation of N6-(dimethylallyl)adenosine (i(6)A), leading to the formation of 2-methylthio-N6-(dimethylallyl)adenosine (ms(2)i(6)A) at position 37 in tRNAs that read codons beginning with uridine. The protein is tRNA-2-methylthio-N(6)-dimethylallyladenosine synthase of Paraburkholderia phymatum (strain DSM 17167 / CIP 108236 / LMG 21445 / STM815) (Burkholderia phymatum).